The primary structure comprises 23 residues: Profilin (23 aa).

The protein belongs to the profilin family. As to quaternary structure, occurs in many kinds of cells as a complex with monomeric actin in a 1:1 ratio.

Its subcellular location is the cytoplasm. It is found in the cytoskeleton. Its function is as follows. Binds to actin and affects the structure of the cytoskeleton. At high concentrations, profilin prevents the polymerization of actin, whereas it enhances it at low concentrations. By binding to PIP2, it inhibits the formation of IP3 and DG. The protein is Profilin of Beta vulgaris (Sugar beet).